The following is a 303-amino-acid chain: Phosphatidylglycerol--prolipoprotein diacylglyceryl transferase (303 aa).

4 helical membrane-spanning segments follow: residues 18-38, 58-78, 106-126, and 133-153; these read LGPF…LVGL, LLPI…VAFE, IWGG…SIIF, and EHFW…QAIG. R154 contacts a 1,2-diacyl-sn-glycero-3-phospho-(1'-sn-glycerol). Helical transmembrane passes span 193 to 213, 223 to 243, and 266 to 286; these read PTFL…IFLF, LPPG…RFWI, and IAQL…WRIY.

The protein belongs to the Lgt family.

It is found in the cell inner membrane. The enzyme catalyses L-cysteinyl-[prolipoprotein] + a 1,2-diacyl-sn-glycero-3-phospho-(1'-sn-glycerol) = an S-1,2-diacyl-sn-glyceryl-L-cysteinyl-[prolipoprotein] + sn-glycerol 1-phosphate + H(+). It participates in protein modification; lipoprotein biosynthesis (diacylglyceryl transfer). Catalyzes the transfer of the diacylglyceryl group from phosphatidylglycerol to the sulfhydryl group of the N-terminal cysteine of a prolipoprotein, the first step in the formation of mature lipoproteins. This is Phosphatidylglycerol--prolipoprotein diacylglyceryl transferase from Prochlorococcus marinus (strain NATL2A).